The sequence spans 208 residues: A-type ATP synthase subunit E (208 aa).

Belongs to the V-ATPase E subunit family. In terms of assembly, has multiple subunits with at least A(3), B(3), C, D, E, F, H, I and proteolipid K(x).

The protein resides in the cell membrane. Its function is as follows. Component of the A-type ATP synthase that produces ATP from ADP in the presence of a proton gradient across the membrane. This is A-type ATP synthase subunit E from Ignicoccus hospitalis (strain KIN4/I / DSM 18386 / JCM 14125).